Here is a 315-residue protein sequence, read N- to C-terminus: Ribose-phosphate pyrophosphokinase (315 aa).

ATP-binding positions include aspartate 37–glutamate 39 and arginine 96–glutamine 97. Residues histidine 131 and aspartate 170 each coordinate Mg(2+). Residue lysine 194 is part of the active site. D-ribose 5-phosphate-binding positions include arginine 196, aspartate 220, and aspartate 224–threonine 228.

It belongs to the ribose-phosphate pyrophosphokinase family. Class I subfamily. Homohexamer. Mg(2+) serves as cofactor.

It localises to the cytoplasm. It carries out the reaction D-ribose 5-phosphate + ATP = 5-phospho-alpha-D-ribose 1-diphosphate + AMP + H(+). The protein operates within metabolic intermediate biosynthesis; 5-phospho-alpha-D-ribose 1-diphosphate biosynthesis; 5-phospho-alpha-D-ribose 1-diphosphate from D-ribose 5-phosphate (route I): step 1/1. Its function is as follows. Involved in the biosynthesis of the central metabolite phospho-alpha-D-ribosyl-1-pyrophosphate (PRPP) via the transfer of pyrophosphoryl group from ATP to 1-hydroxyl of ribose-5-phosphate (Rib-5-P). This is Ribose-phosphate pyrophosphokinase from Escherichia coli O6:H1 (strain CFT073 / ATCC 700928 / UPEC).